The following is a 499-amino-acid chain: Probable dipeptidase B (499 aa).

C26 is a catalytic residue.

The protein belongs to the peptidase C69 family.

The catalysed reaction is an L-aminoacyl-L-amino acid + H2O = 2 an L-alpha-amino acid. The protein is Probable dipeptidase B (pepDB) of Streptococcus pyogenes serotype M18 (strain MGAS8232).